The chain runs to 90 residues: Molybdopterin synthase sulfur carrier subunit (90 aa).

The residue at position 90 (glycine 90) is a 1-thioglycine; alternate. Glycine 90 carries the post-translational modification Glycyl adenylate; alternate.

This sequence belongs to the MoaD family. MOCS2A subfamily. Heterotetramer; composed of 2 small (Mocs2A) and 2 large (Mocs2B) subunits. C-terminal thiocarboxylation occurs in 2 steps, it is first acyl-adenylated (-COAMP) via the hesA/moeB/thiF part of MOCS3, then thiocarboxylated (-COSH) via the rhodanese domain of MOCS3.

The protein resides in the cytoplasm. It participates in cofactor biosynthesis; molybdopterin biosynthesis. Its function is as follows. Acts as a sulfur carrier required for molybdopterin biosynthesis. Component of the molybdopterin synthase complex that catalyzes the conversion of precursor Z into molybdopterin by mediating the incorporation of 2 sulfur atoms into precursor Z to generate a dithiolene group. In the complex, serves as sulfur donor by being thiocarboxylated (-COSH) at its C-terminus by MOCS3. After interaction with Mocs2B, the sulfur is then transferred to precursor Z to form molybdopterin. The polypeptide is Molybdopterin synthase sulfur carrier subunit (Drosophila erecta (Fruit fly)).